We begin with the raw amino-acid sequence, 594 residues long: Putative lipase ATG15-1 (594 aa).

Residues 1–12 (MRRRPLCTSASR) lie on the Cytoplasmic side of the membrane. The chain crosses the membrane as a helical; Signal-anchor for type II membrane protein span at residues 13–33 (VTASLLLSFLAVSSAAELPIL). Topologically, residues 34–594 (PAPPISPQPH…ANHFVYVLHA (561 aa)) are lumenal. N-linked (GlcNAc...) asparagine glycans are attached at residues asparagine 144, asparagine 179, asparagine 201, asparagine 259, and asparagine 283. Serine 299 functions as the Charge relay system in the catalytic mechanism. Residues asparagine 432 and asparagine 445 are each glycosylated (N-linked (GlcNAc...) asparagine). Residues 447–469 (TETTTTSTSKPTSTSKSSKSNTR) show a composition bias toward low complexity. Disordered stretches follow at residues 447–473 (TETT…TRTE) and 489–509 (TGTQ…TSTC). N-linked (GlcNAc...) asparagine glycans are attached at residues asparagine 576 and asparagine 582.

It belongs to the AB hydrolase superfamily. Lipase family. Binds to both phosphatidylinositol (PI) and phosphatidylinositol 3,5-bisphosphate (PIP2).

It localises to the endosome. The protein resides in the multivesicular body membrane. The protein localises to the prevacuolar compartment membrane. The enzyme catalyses a triacylglycerol + H2O = a diacylglycerol + a fatty acid + H(+). In terms of biological role, lipase which is essential for lysis of subvacuolar cytoplasm to vacuole targeted bodies and intravacuolar autophagic bodies. Involved in the lysis of intravacuolar multivesicular body (MVB) vesicles. The intravacuolar membrane disintegration by ATG15 is critical to life span extension. The protein is Putative lipase ATG15-1 (ATG15-1) of Phaeosphaeria nodorum (strain SN15 / ATCC MYA-4574 / FGSC 10173) (Glume blotch fungus).